The following is a 432-amino-acid chain: Methylenetetrahydrofolate--tRNA-(uracil-5-)-methyltransferase TrmFO (432 aa).

7-12 (GGGLAG) is an FAD binding site.

This sequence belongs to the MnmG family. TrmFO subfamily. FAD is required as a cofactor.

The protein localises to the cytoplasm. The catalysed reaction is uridine(54) in tRNA + (6R)-5,10-methylene-5,6,7,8-tetrahydrofolate + NADH + H(+) = 5-methyluridine(54) in tRNA + (6S)-5,6,7,8-tetrahydrofolate + NAD(+). The enzyme catalyses uridine(54) in tRNA + (6R)-5,10-methylene-5,6,7,8-tetrahydrofolate + NADPH + H(+) = 5-methyluridine(54) in tRNA + (6S)-5,6,7,8-tetrahydrofolate + NADP(+). In terms of biological role, catalyzes the folate-dependent formation of 5-methyl-uridine at position 54 (M-5-U54) in all tRNAs. In Coprothermobacter proteolyticus (strain ATCC 35245 / DSM 5265 / OCM 4 / BT), this protein is Methylenetetrahydrofolate--tRNA-(uracil-5-)-methyltransferase TrmFO.